Reading from the N-terminus, the 243-residue chain is Putative C-type lectin protein A7 (243 aa).

The helical transmembrane segment at 23–43 (IFFILAATNLMIAAFALGCLA) threads the bilayer. The C-type lectin domain occupies 116 to 223 (GQKACYYVPP…CTTSKLCLCG (108 aa)). 2 disulfides stabilise this stretch: Cys137/Cys222 and Cys198/Cys214.

Its subcellular location is the host membrane. The chain is Putative C-type lectin protein A7 (A7) from Alcelaphine herpesvirus 1 (strain C500) (AlHV-1).